Consider the following 2894-residue polypeptide: MANFTKLKNRLRADFTKNPQSIDVPNLLLLQRNSYDDFLCVDSDKESGIERVFKSVFPIQDSQNRITLEYVSCKFGKPKYTTNEAMVRGVTYAVSLQIKIRLVLWEKDEKTGERLGIKDAKEQNIFVRDIPLMTDRTSFIINGVERVVVNQLHRSPGVIFKEEESSASSNKLIYTGQIIPDRGSWLYFEYDSKDVLYARINKRRKVPVTIILRAMGYSKQDILKIFYPLQRVKYKKGKYLIPFDVDSIGNRAEFDIKDAKGNLLVSSGKRLSTKKIKELKEAKIDLIEYPLENLTNKFLAEPIINAQGEVLFDTLTQLDESKLKKLLELKINEFVIANASAAGVDNSIINSFMADAESLKMLRQSEKIDDENELAAIRIYKVMRPGEPVTKEVAKSFVRQLFFDPERYDLTRVGRMKMNHKLQINVPDYVTVLTHEDIIRTIQYLLKVKNGLGKIDDRDHLGNRRIRSIGELLANELHTGLVKMQKAIRDKLTSLSGAFDTIMPHDLINGKMITSTIMEFFTGGQLSQFMDQTNPLSEVTHKRRLSALGEGGLVKDRVGFEARDVHPTHYGRICPIETPEGQNIGLINTLSTYTRVNDLGFIEAPYRKVENGIVSQEIVYLTAAQEEGIVIAPASTAVDKNGHIIEDLIETRKDGEIILSEKSRVQLIDLSPRMLVGVAASLIPFLEHDDANRALMGSNMQRQAVPLLKPDAPVVGTGIEQIIARDSWEATKATRSGVVERVDAKNIYILGEDDNGAYIDHYHLGKNLRTNQNTCFSQQPIVRQGDRVEQGQIIADGPSMDNGELALGKNIRVAFMPWNGYNFEDAIVVSERLIKEDAFTSIHIYEKEIEARELKHGLEEITADIPGTKEAETAHLDESGIVRIGTYVSAGMILVGKVSPKGEVKPTPEERLLRAIFGEKAGHVVNKSLYCPPSLEGTVVDVKIFTKKGYEKDARAISAYEEEKRVLDIEHHDRLTMIQQEETLRISLMLSKEKLLSEVKVADKVFKKGAQIPKEELSVLNPFILSTLIKHYPKEIQTRYEQIKTNFLEQKKTLGEEHEEKLSILEKDDILPSGVVKLVKIYIATKRKLKVGDKMAGRHGNKGIVSNIVPMVDMPYTADGEPVDIVLNPLGVPSRMNIGQILEVHLGLVGKRLGQQIQEILSSQSKQWLDTLRSKMIEIAQVVNSDDKSMIEFLKNLDNEALLAYARDWSNGVKFAIPVFEGIEQEKFDKLFSLVKVDMDGKTELYDGKTGEKMRERVNVGYMYMLKLHHLVDEKVHARSTGPYSLVTQQPVGGKALFGGQRFGEMEVWALEAYGAAHTLKEMLTIKSDDTEGRRGAYKAITKGEHVGESEIPETFYVLTKELQSLALDVNIYGDEQDENGMPVPIAIKEDERPKDFSSFQLVLASPEKILSWSNGEVKKPETINYRTLKPERDGLFCTKIFGPVRDYECLCGKYKKMRYKGIVCEKCGVEVTKAKVRRSRMGHIELVAPVAHIWYVSSLPSRIGTLLGVKMKDLERVLYYEAYIVKSPGEAFYDNEGSKPILKYDVLNEEQFQSINQRFEHTGFVAQMGGEAIKELLEELDLILLLNTLREEIRSTNSEAKKKTIVKRLKVVESFINSGNRPEWMMLTILPVLPPDLRPLVALDGGKFAVSDVNDLYRRVINRNQRLKRLIELDSPEIIVRNEKRMLQEAVDALFDNGRNANAVKGANKRPLKSLSEIIKGKQGRFRQNLLGKRVDFSGRSVIVVGPNLKMNQCGLPKNMALELFKPHLFAKLEEKGYATTLKQAVKMVNQKTNEVWECLQEIVNGYPVLLNRAPTLHKQSIQAFHPKLIDGKAIQLHPLVCSAFNADFDGDQMAVHVPLSQEAIAECKILMLSSMNILLPASGKAVAVPSQDMVLGLYYLSLEKKGVKGEHKILASIDEIVMAIEMGELDINARIKTVHNRRVIDTTAGRMILSSILPDFVPLNLWNQTMKKKDIGTLIDYVYKEGGLGITATFLDNLKNLGFKYATKAGISISAADIIIPHNKATMIDEAKKEIKRIQGEFEQGLLTAQERYNKSIDIWTETSEKMGKLMMEKVKNDKEGFNSIYMMADSGARGSEAQIRQLSAMRGLMAKPDGTIIETPITSNFKEGLNVLEYFNSTHGARKGLADTALKTANAGYLTRKLIDVSQNMKVTIEDCGTHEGVEITDITVGSDMIEPLEERVVGRVLARDVIDPIANEILLSEGVLIDSTMARRIKEANVKSVMIRTPVTCKAQKGVCAKCYGLNLGESKMVKPGEAVGVLAAQSIGEPGTQLTLRTFHVGGTASRSTEEKQIVAKKEGFIRYYNIRTYTNSKGQKIVANRRNAAILVVEPRIKAEFDGELEVENVHDEVHITIVGDKKRSETYRLRKDDVAKQNELAGVAGKIEGKLLVPHESGYKVKAGGSIVDTIMDSWNIPTRIPYGSELKVEDNAPISQKITAKEKGIVKFYTLRADTLERNHNVKAGMVVSEKGMFAVIADQNDREAIRHYIARTSKILVDDNSEVDINTLISEPTSTEQIVVAEWDAYSEPIIADQAGIVSFRDIIAGLTVSEQEDENTHQKNFVINEYVPAGYKPMLVVTTKDGKEISYRLESRTSIAVNDGDKVEIADIIAKVPKALAKSKDITGGLPRVTELFEARKPKDTAILSELDGTVSFGKPIRGKERIIITAADGRVAEYAVDKNKKILVHEQEFIHAGEAMTDGVISSHDILRISGEKELHKYIVSEVQQVYRRQGVSIADKHIEIIVSQMLRQVKIVDSGNTKFIEGDLASKRHFKEENERILSIGGEPAVAEPVLLGITRAAIGSDSIISAASFQETTKVLTEASIAAKKDTLDDLKENVVLGRMIPVGTGLYKNKKFHYRCEKQEEYEEDEEE.

Residues 1-1378 are DNA-directed RNA polymerase subunit beta; the sequence is MANFTKLKNR…DVNIYGDEQD (1378 aa). Positions 1385–2894 are DNA-directed RNA polymerase subunit beta'; the sequence is PIAIKEDERP…QEEYEEDEEE (1510 aa). The Zn(2+) site is built by C1450, C1452, C1465, and C1468. Residues D1849, D1851, and D1853 each contribute to the Mg(2+) site. Positions 2179, 2253, 2260, and 2263 each coordinate Zn(2+).

The protein in the N-terminal section; belongs to the RNA polymerase beta chain family. This sequence in the C-terminal section; belongs to the RNA polymerase beta' chain family. In terms of assembly, the RNAP catalytic core consists of 2 alpha, 1 beta/beta' and 1 omega subunit. When a sigma factor is associated with the core the holoenzyme is formed, which can initiate transcription. Requires Mg(2+) as cofactor. Zn(2+) serves as cofactor.

It catalyses the reaction RNA(n) + a ribonucleoside 5'-triphosphate = RNA(n+1) + diphosphate. DNA-dependent RNA polymerase catalyzes the transcription of DNA into RNA using the four ribonucleoside triphosphates as substrates. The chain is Bifunctional DNA-directed RNA polymerase subunit beta-beta' (rpoBC) from Helicobacter hepaticus (strain ATCC 51449 / 3B1).